We begin with the raw amino-acid sequence, 545 residues long: Chaperonin GroEL (545 aa).

ATP is bound by residues 30 to 33 (TLGP), Lys-51, 87 to 91 (DGTTT), Gly-415, and Asp-496.

This sequence belongs to the chaperonin (HSP60) family. In terms of assembly, forms a cylinder of 14 subunits composed of two heptameric rings stacked back-to-back. Interacts with the co-chaperonin GroES.

It localises to the cytoplasm. The catalysed reaction is ATP + H2O + a folded polypeptide = ADP + phosphate + an unfolded polypeptide.. Together with its co-chaperonin GroES, plays an essential role in assisting protein folding. The GroEL-GroES system forms a nano-cage that allows encapsulation of the non-native substrate proteins and provides a physical environment optimized to promote and accelerate protein folding. This is Chaperonin GroEL from Chlorobaculum tepidum (strain ATCC 49652 / DSM 12025 / NBRC 103806 / TLS) (Chlorobium tepidum).